The following is a 204-amino-acid chain: Holliday junction branch migration complex subunit RuvA (204 aa).

The segment at 1–64 is domain I; sequence MIGRLQGILL…EDAHLLFGFS (64 aa). The tract at residues 65–143 is domain II; it reads AKTDRTLFRE…GIKQPDFFVE (79 aa). The tract at residues 144–155 is flexible linker; that stretch reads SSHVGAVDPVTT. A domain III region spans residues 156–204; it reads SPEVPAEEAVAALMALGYKASDAEKMVKRIAKPHLTSEQLIREALKAAL.

The protein belongs to the RuvA family. In terms of assembly, homotetramer. Forms an RuvA(8)-RuvB(12)-Holliday junction (HJ) complex. HJ DNA is sandwiched between 2 RuvA tetramers; dsDNA enters through RuvA and exits via RuvB. An RuvB hexamer assembles on each DNA strand where it exits the tetramer. Each RuvB hexamer is contacted by two RuvA subunits (via domain III) on 2 adjacent RuvB subunits; this complex drives branch migration. In the full resolvosome a probable DNA-RuvA(4)-RuvB(12)-RuvC(2) complex forms which resolves the HJ.

It is found in the cytoplasm. Functionally, the RuvA-RuvB-RuvC complex processes Holliday junction (HJ) DNA during genetic recombination and DNA repair, while the RuvA-RuvB complex plays an important role in the rescue of blocked DNA replication forks via replication fork reversal (RFR). RuvA specifically binds to HJ cruciform DNA, conferring on it an open structure. The RuvB hexamer acts as an ATP-dependent pump, pulling dsDNA into and through the RuvAB complex. HJ branch migration allows RuvC to scan DNA until it finds its consensus sequence, where it cleaves and resolves the cruciform DNA. This Mannheimia succiniciproducens (strain KCTC 0769BP / MBEL55E) protein is Holliday junction branch migration complex subunit RuvA.